A 103-amino-acid polypeptide reads, in one-letter code: Histone H4 (103 aa).

Positions 1-14 (MTGRGKGGKGLGKG) are enriched in gly residues. The interval 1–20 (MTGRGKGGKGLGKGGAKRHR) is disordered. K6 and K13 each carry N6-acetyl-N6-methyllysine; alternate. A DNA-binding region spans residues 17-21 (KRHRK).

Belongs to the histone H4 family. As to quaternary structure, the nucleosome is a histone octamer containing two molecules each of H2A, H2B, H3 and H4 assembled in one H3-H4 heterotetramer and two H2A-H2B heterodimers. The octamer wraps approximately 147 bp of DNA.

Its subcellular location is the nucleus. The protein localises to the chromosome. Its function is as follows. Core component of nucleosome. Nucleosomes wrap and compact DNA into chromatin, limiting DNA accessibility to the cellular machineries which require DNA as a template. Histones thereby play a central role in transcription regulation, DNA repair, DNA replication and chromosomal stability. DNA accessibility is regulated via a complex set of post-translational modifications of histones, also called histone code, and nucleosome remodeling. The protein is Histone H4 (His4) of Myrmica ruginodis (Red ant).